The chain runs to 210 residues: MADS-box protein AGL42 (210 aa).

Positions 1-61 constitute an MADS-box domain; that stretch reads MVRGKIEMKK…GRLYEFSSSD (61 aa). In terms of domain architecture, K-box spans 87–177; that stretch reads LQQLKQEASH…HQKNVINPWR (91 aa).

As to expression, expressed in quiescent center (QC) cells of root tips. Expressed at the base of the petiole of cotyledons and leaves, in flower buds, petals, sepals and abscission zone of flowers and siliques.

It localises to the nucleus. MADS-box transcription factor that acts with AGL71 and AGL72 in the control of flowering time. Promotes flowering at the shoot apical and axillary meristems. Seems to act through a gibberellin-dependent pathway. Interacts genetically with SOC1 and its expression is directly regulated by SOC1. Plays a role in controlling flower organ senescence and abscission by repressing ethylene responses and regulating the expression of BOP2 and IDA. This is MADS-box protein AGL42 (AGL42) from Arabidopsis thaliana (Mouse-ear cress).